Here is a 219-residue protein sequence, read N- to C-terminus: Ribose-5-phosphate isomerase A (219 aa).

Substrate-binding positions include 28 to 31 (TGST), 81 to 84 (DGAD), and 94 to 97 (KGGG). The active-site Proton acceptor is Glu103. Lys121 contributes to the substrate binding site.

The protein belongs to the ribose 5-phosphate isomerase family. In terms of assembly, homodimer.

The enzyme catalyses aldehydo-D-ribose 5-phosphate = D-ribulose 5-phosphate. It functions in the pathway carbohydrate degradation; pentose phosphate pathway; D-ribose 5-phosphate from D-ribulose 5-phosphate (non-oxidative stage): step 1/1. In terms of biological role, catalyzes the reversible conversion of ribose-5-phosphate to ribulose 5-phosphate. The sequence is that of Ribose-5-phosphate isomerase A from Acidithiobacillus ferrooxidans (strain ATCC 23270 / DSM 14882 / CIP 104768 / NCIMB 8455) (Ferrobacillus ferrooxidans (strain ATCC 23270)).